Reading from the N-terminus, the 245-residue chain is 2,3-bisphosphoglycerate-dependent phosphoglycerate mutase (245 aa).

Residues 8–15 (RHGQSLWN), 21–22 (TG), Arg60, 87–90 (ERHY), Lys98, 114–115 (RR), and 183–184 (GN) contribute to the substrate site. The Tele-phosphohistidine intermediate role is filled by His9. The active-site Proton donor/acceptor is the Glu87.

The protein belongs to the phosphoglycerate mutase family. BPG-dependent PGAM subfamily.

The catalysed reaction is (2R)-2-phosphoglycerate = (2R)-3-phosphoglycerate. Its pathway is carbohydrate degradation; glycolysis; pyruvate from D-glyceraldehyde 3-phosphate: step 3/5. Its function is as follows. Catalyzes the interconversion of 2-phosphoglycerate and 3-phosphoglycerate. The polypeptide is 2,3-bisphosphoglycerate-dependent phosphoglycerate mutase (Bacillus cereus (strain G9842)).